We begin with the raw amino-acid sequence, 256 residues long: Pyridoxine 5'-phosphate synthase (256 aa).

3-amino-2-oxopropyl phosphate-binding residues include asparagine 8 and arginine 19. Residue histidine 44 is the Proton acceptor of the active site. Residues arginine 46 and histidine 51 each contribute to the 1-deoxy-D-xylulose 5-phosphate site. Glutamate 74 acts as the Proton acceptor in catalysis. Threonine 111 provides a ligand contact to 1-deoxy-D-xylulose 5-phosphate. Catalysis depends on histidine 202, which acts as the Proton donor. 3-amino-2-oxopropyl phosphate contacts are provided by residues aspartate 203 and 225–226 (GH).

This sequence belongs to the PNP synthase family. In terms of assembly, homooctamer; tetramer of dimers.

The protein localises to the cytoplasm. It carries out the reaction 3-amino-2-oxopropyl phosphate + 1-deoxy-D-xylulose 5-phosphate = pyridoxine 5'-phosphate + phosphate + 2 H2O + H(+). Its pathway is cofactor biosynthesis; pyridoxine 5'-phosphate biosynthesis; pyridoxine 5'-phosphate from D-erythrose 4-phosphate: step 5/5. In terms of biological role, catalyzes the complicated ring closure reaction between the two acyclic compounds 1-deoxy-D-xylulose-5-phosphate (DXP) and 3-amino-2-oxopropyl phosphate (1-amino-acetone-3-phosphate or AAP) to form pyridoxine 5'-phosphate (PNP) and inorganic phosphate. The polypeptide is Pyridoxine 5'-phosphate synthase (Xanthomonas campestris pv. campestris (strain 8004)).